Here is a 205-residue protein sequence, read N- to C-terminus: uncharacterized protein (205 aa).

The Cytoplasmic segment spans residues 1 to 63 (MQRTRELESS…QHPKVAKFLK (63 aa)). A helical membrane pass occupies residues 64–84 (VQLVFDLISLFIFATHQLLLL). Topologically, residues 85 to 124 (EDGNFGKHYFKRKTKRCSKFSCSRCNANAHHPKWFKFKHS) are extracellular. The chain crosses the membrane as a helical span at residues 125 to 145 (LLCLGTFCFGVYSLVKINKFF). The Cytoplasmic portion of the chain corresponds to 146–205 (KTDQTVDLNRLLELFFWQLNAILNMKLFAFYGDHLESHSAPLDVYEDSFANKSSSGGDEV).

The protein resides in the membrane. This is an uncharacterized protein from Saccharomyces cerevisiae (strain ATCC 204508 / S288c) (Baker's yeast).